Here is a 334-residue protein sequence, read N- to C-terminus: NAC domain-containing protein 66 (334 aa).

An NAC domain is found at 11–175 (VPPGFRFHPT…GWVVCRVFKK (165 aa)). Residues 111 to 181 (IGMRKTLVFY…VFKKNNLCKN (71 aa)) mediate DNA binding.

As to expression, mostly expressed in anthers. Also present in pollen, base of siliques and inflorescence stems.

The protein resides in the nucleus. Transcription activator of genes involved in biosynthesis of secondary walls. Together with NST1, required for the secondary cell wall thickening of the anther endocethium, which is necessary for anther dehiscence. May also regulate the secondary cell wall lignification of other tissues such as tracheary elements. This chain is NAC domain-containing protein 66 (NAC066), found in Arabidopsis thaliana (Mouse-ear cress).